Reading from the N-terminus, the 325-residue chain is Outer spore wall protein LDS1 (325 aa).

Topologically, residues 1 to 91 (MSFTGSLALA…NTNKSSYSTT (91 aa)) are cytoplasmic. A helical membrane pass occupies residues 92 to 112 (MLGILSSYLIMFALVSFVYWA). Topologically, residues 113 to 118 (TITPMY) are extracellular. A helical membrane pass occupies residues 119–139 (TAFLIVLGPIGLFIAIFHSFL). The Cytoplasmic portion of the chain corresponds to 140 to 208 (QANVFTLLFM…VKYMLGLSVL (69 aa)). The chain crosses the membrane as a helical span at residues 209–229 (FVLLVISFFPLIGPILFHILI). The Extracellular segment spans residues 230 to 263 (SPFITQIYFTKVLRLQNFDNIQRRENIYLHAGQY). Residues 264-284 (ASFGFLAGLIESVPILAGFAI) traverse the membrane as a helical segment. Topologically, residues 285 to 325 (STNTIGSVLFNLDHPMVPENLVETQAEIEAAPQDINQQPNQ) are cytoplasmic.

It belongs to the LDS family.

The protein resides in the prospore membrane. Its subcellular location is the lipid droplet. It localises to the spore wall. In terms of biological role, involved in spore wall assembly. In Saccharomyces cerevisiae (strain ATCC 204508 / S288c) (Baker's yeast), this protein is Outer spore wall protein LDS1.